Here is a 143-residue protein sequence, read N- to C-terminus: Antiholin-like protein LrgA (143 aa).

4 helical membrane passes run V6–I26, L30–L50, L61–I81, and V97–L117.

This sequence belongs to the CidA/LrgA family. LrgA subfamily.

It is found in the cell membrane. Inhibits the expression or activity of extracellular murein hydrolases by interacting, possibly with LrgB, with the holin-like protein CidA. The LrgAB and CidA proteins may affect the proton motive force of the membrane. May be involved in programmed cell death (PCD), possibly triggering PCD in response to antibiotics and environmental stresses. The chain is Antiholin-like protein LrgA from Bacillus anthracis (strain A0248).